The following is a 421-amino-acid chain: Zinc finger protein 584 (421 aa).

A KRAB domain is found at 17–88 (VMFEDVTVYF…SWVDVTPVSR (72 aa)). The segment covering 120-129 (QHQDTHSEGK) has biased composition (basic and acidic residues). The disordered stretch occupies residues 120–146 (QHQDTHSEGKPRRHTEHGAAFPPGSSC). 8 consecutive C2H2-type zinc fingers follow at residues 159 to 181 (FKCS…LITH), 214 to 236 (HVCN…QKVH), 242 to 264 (FKCS…QRIH), 270 to 292 (YECS…RKVH), 298 to 320 (YECT…QRVH), 326 to 348 (FECK…WKVH), 354 to 376 (YECS…QQFH), and 382 to 404 (YECT…KKVH). The tract at residues 402–421 (KVHTPERRQEDRAHGKVVSC) is disordered. The segment covering 404-415 (HTPERRQEDRAH) has biased composition (basic and acidic residues).

It belongs to the krueppel C2H2-type zinc-finger protein family.

The protein resides in the nucleus. May be involved in transcriptional regulation. The sequence is that of Zinc finger protein 584 (ZNF584) from Homo sapiens (Human).